We begin with the raw amino-acid sequence, 122 residues long: Ribosome-binding factor A (122 aa).

Belongs to the RbfA family. In terms of assembly, monomer. Binds 30S ribosomal subunits, but not 50S ribosomal subunits or 70S ribosomes.

It localises to the cytoplasm. In terms of biological role, one of several proteins that assist in the late maturation steps of the functional core of the 30S ribosomal subunit. Associates with free 30S ribosomal subunits (but not with 30S subunits that are part of 70S ribosomes or polysomes). Required for efficient processing of 16S rRNA. May interact with the 5'-terminal helix region of 16S rRNA. The protein is Ribosome-binding factor A of Albidiferax ferrireducens (strain ATCC BAA-621 / DSM 15236 / T118) (Rhodoferax ferrireducens).